The chain runs to 815 residues: Patatin-like phospholipase domain-containing protein LELG_00944 (815 aa).

Residues 41–50 (VSTTAPTTPL) are compositionally biased toward polar residues. 2 disordered regions span residues 41 to 105 (VSTT…PQLK) and 140 to 166 (SENL…STSP). The segment covering 54–73 (LDMGDLSLLGGELGNGSDDV) has biased composition (low complexity). The segment covering 74–94 (VVGDDDDDDDDDDDDDDDDDD) has biased composition (acidic residues). The segment covering 148-160 (KRTKFAKSSKSSK) has biased composition (basic residues). A helical membrane pass occupies residues 185-205 (WPILTFVVIWVTILGFLYLAV). Positions 360-552 (LCLSGGACFA…RTDIPIDALN (193 aa)) constitute a PNPLA domain. The short motif at 391 to 395 (GTSGG) is the GXSXG element. The Nucleophile role is filled by Ser393. Asp539 serves as the catalytic Proton acceptor. The segment at 753 to 815 (GSTLRDDDAD…LTKERRHTVY (63 aa)) is disordered. Acidic residues predominate over residues 759-799 (DDADADVDEDDNEDEDEEDEDENDYEEYDVEDLDDPYESDA).

The protein belongs to the PLPL family.

It localises to the membrane. Probable lipid hydrolase. The polypeptide is Patatin-like phospholipase domain-containing protein LELG_00944 (Lodderomyces elongisporus (strain ATCC 11503 / CBS 2605 / JCM 1781 / NBRC 1676 / NRRL YB-4239) (Yeast)).